A 405-amino-acid polypeptide reads, in one-letter code: Mitochondrial outer membrane protein SLC25A46 (405 aa).

The disordered stretch occupies residues 1–77 (MTSRRPDSFE…PDEAQSAAPP (77 aa)). Residues 22–37 (FSGGYSGRSFNNSSSS) are compositionally biased toward low complexity. Residues 80-171 (QLNRFAGFGI…GIISECTPLP (92 aa)) form a Solcar 1 repeat. Transmembrane regions (helical) follow at residues 87–107 (FGIG…CIVF), 151–171 (FVVQ…TPLP), 183–203 (VVGH…FYSA), 242–262 (LLPL…HYII), 302–322 (FPEL…LFPL), and 371–391 (MGFY…ATVL). A Solcar 2 repeat occupies 299 to 401 (DAYFPELMAS…QITKMIYSTL (103 aa)).

Belongs to the mitochondrial carrier (TC 2.A.29) family.

The protein localises to the mitochondrion outer membrane. Functionally, transmembrane protein of the mitochondrial outer membrane that controls mitochondrial organization. May regulate the biogenesis and dynamics of mitochondrial cristae, the inwards folds of the inner mitochondrial membrane. Could regulate mitochondrial lipid homeostasis and thereby mitochondrial fission. The chain is Mitochondrial outer membrane protein SLC25A46 (slc25a46) from Danio rerio (Zebrafish).